The following is a 541-amino-acid chain: Ascorbate transporter, chloroplastic (541 aa).

The transit peptide at 1–28 (MALGGLISNRNFGSFIGSGNGCQRLGKS) directs the protein to the chloroplast. The next 11 membrane-spanning stretches (helical) occupy residues 133–155 (VIVL…MSIA), 170–190 (VGLI…LGGI), 199–219 (VVLG…PIAA), 221–241 (LGLP…GVAM), 263–283 (LVYS…PMLI), 286–306 (FGWP…FLLW), 352–372 (VWAL…LLTW), 390–410 (LLCV…GWIA), 430–450 (IGFL…TPAM), 481–501 (AGVL…FGTA), and 515–535 (VFKV…LFAT).

It belongs to the major facilitator superfamily. Sodium/anion cotransporter (TC 2.A.1.14) family. As to expression, expressed in stems, developing siliques, leaf mesophyll cells and sepals of mature flowers. Not detected in roots. Detected in palisade tissue rather than spongy tissue from the leaves.

It is found in the plastid. It localises to the chloroplast inner membrane. With respect to regulation, insensitive to dehydroascorbate, p-isoascorbate, inorganic phosphate, glutamate, ATP, p-aminohippuric acid or tetraethylammonium. In terms of biological role, inorganic phosphate and probable anion transporter. Ascorbate transporter bridging the chloroplast envelope. Transports ascorbate from the cytosol into the chloroplast. Requires chloride ions and the presence of an electrochemical potential across the membrane for activity. The polypeptide is Ascorbate transporter, chloroplastic (PHT4;4) (Arabidopsis thaliana (Mouse-ear cress)).